A 451-amino-acid polypeptide reads, in one-letter code: Tubulin alpha-2 chain (451 aa).

Residue Q11 coordinates GTP. K40 bears the N6-acetyllysine mark. The GTP site is built by E71, S140, G144, T145, T179, N206, and N228. E71 lines the Mg(2+) pocket. Residue E254 is part of the active site. Residues 432 to 451 (YEEVGIDTADGEDDEEANDY) form a disordered region.

The protein belongs to the tubulin family. Dimer of alpha and beta chains. A typical microtubule is a hollow water-filled tube with an outer diameter of 25 nm and an inner diameter of 15 nM. Alpha-beta heterodimers associate head-to-tail to form protofilaments running lengthwise along the microtubule wall with the beta-tubulin subunit facing the microtubule plus end conferring a structural polarity. Microtubules usually have 13 protofilaments but different protofilament numbers can be found in some organisms and specialized cells. Mg(2+) is required as a cofactor. In terms of processing, undergoes a tyrosination/detyrosination cycle, the cyclic removal and re-addition of a C-terminal tyrosine residue by the enzymes tubulin tyrosine carboxypeptidase (TTCP) and tubulin tyrosine ligase (TTL), respectively. Acetylation of alpha chains at Lys-40 stabilizes microtubules and affects affinity and processivity of microtubule motors. This modification has a role in multiple cellular functions, ranging from cell motility, cell cycle progression or cell differentiation to intracellular trafficking and signaling.

Its subcellular location is the cytoplasm. It localises to the cytoskeleton. The enzyme catalyses GTP + H2O = GDP + phosphate + H(+). In terms of biological role, tubulin is the major constituent of microtubules, a cylinder consisting of laterally associated linear protofilaments composed of alpha- and beta-tubulin heterodimers. Microtubules grow by the addition of GTP-tubulin dimers to the microtubule end, where a stabilizing cap forms. Below the cap, tubulin dimers are in GDP-bound state, owing to GTPase activity of alpha-tubulin. The polypeptide is Tubulin alpha-2 chain (Homarus americanus (American lobster)).